Here is a 1108-residue protein sequence, read N- to C-terminus: Retinal guanylyl cyclase 2 (1108 aa).

Residues 1–50 form the signal peptide; sequence MFLGLGRFSRLVLWFAAFRKLLGHHGLASAKFLWCLCLLSVMSLPQQVWT. Residues 51–467 are Extracellular-facing; it reads LPYKIGVVGP…KICHGGIDPA (417 aa). A disulfide bridge links Cys104 with Cys132. The chain crosses the membrane as a helical span at residues 468-490; it reads FAMMVCLTLLIALLSINGFAYFI. Topologically, residues 491–1108 are cytoplasmic; that stretch reads RRRINKIQLI…AERQLVRNKP (618 aa). Residues 532-812 form the Protein kinase domain; the sequence is FQITSEVQSG…DEIFNQFKTF (281 aa). In terms of domain architecture, Guanylate cyclase spans 884 to 1014; sequence TLYFSDIVGF…DTVNTASRME (131 aa).

The protein belongs to the adenylyl cyclase class-4/guanylyl cyclase family. Homodimer. Interacts with RD3; promotes the exit of GUCY2F from the endoplasmic reticulum and its trafficking to the photoreceptor outer segments. In terms of processing, there are 9 conserved cysteine residues in sensory guanylate cyclases, 6 in the extracellular domain, which may be involved in intra- or interchain disulfide bonds. Retina. Localized exclusively in the outer nuclear layer and inner segments of the rod and cone photoreceptor cells.

The protein localises to the photoreceptor outer segment membrane. It carries out the reaction GTP = 3',5'-cyclic GMP + diphosphate. Activated by GUCA1B when free calcium ions concentration is low, and inhibited by GUCA1B when free calcium ions concentration is high. Inhibited by RD3. Functionally, responsible for the synthesis of cyclic GMP (cGMP) in rods and cones of photoreceptors. Plays an essential role in phototransduction, by mediating cGMP replenishment. May also participate in the trafficking of membrane-asociated proteins to the photoreceptor outer segment membrane. This chain is Retinal guanylyl cyclase 2 (GUCY2F), found in Homo sapiens (Human).